Reading from the N-terminus, the 303-residue chain is Terpene synthase (303 aa).

Mg(2+) is bound by residues Asp69 and Asp73. A DDXXD motif motif is present at residues 69 to 73 (DDIQD).

It belongs to the FPP/GGPP synthase family. Requires Mg(2+) as cofactor.

The catalysed reaction is (2E)-geranyl diphosphate + H2O = (2E)-geraniol + diphosphate. Functionally, terpene synthase that is able to convert geraniol diphosphate to geraniol in tea leaves. This Matsumurasca onukii (Tea green leafhopper) protein is Terpene synthase.